The sequence spans 246 residues: uncharacterized protein (246 aa).

Residues 7–29 (GRGALASTGGCVVLAVAALMFVF) form a helical membrane-spanning segment.

The protein resides in the membrane. This is an uncharacterized protein from Treponema pallidum (strain Nichols).